The primary structure comprises 413 residues: Multidrug resistance protein MdtA (413 aa).

The first 25 residues, 1-25 (MKNKRRTYFFQFAVLAVVIATAYFA), serve as a signal peptide directing secretion. Positions 394 to 413 (ANTYDQMDKSKPSNSKVENT) are disordered.

The protein belongs to the membrane fusion protein (MFP) (TC 8.A.1) family. As to quaternary structure, part of a tripartite efflux system composed of MdtA, MdtB and MdtC.

Its subcellular location is the cell inner membrane. The chain is Multidrug resistance protein MdtA from Xenorhabdus bovienii (strain SS-2004) (Xenorhabdus nematophila subsp. bovienii).